Consider the following 233-residue polypeptide: C-type lectin domain-containing protein 87 (233 aa).

A signal peptide spans M1–A19. An O-linked (Xyl...) (chondroitin sulfate) serine glycan is attached at S31. N-linked (GlcNAc...) asparagine glycosylation occurs at N81. The C-type lectin domain maps to F93–E223. Cystine bridges form between C114-C222 and C193-C214. N225 is a glycosylation site (N-linked (GlcNAc...) asparagine).

The chain is C-type lectin domain-containing protein 87 from Caenorhabditis elegans.